A 664-amino-acid polypeptide reads, in one-letter code: DNA ligase (664 aa).

Residues 32-36 and 80-81 contribute to the NAD(+) site; these read DKEYD and SL. Lys-122 functions as the N6-AMP-lysine intermediate in the catalytic mechanism. Residues Arg-144, Glu-178, and Lys-314 each coordinate NAD(+). 4 residues coordinate Zn(2+): Cys-407, Cys-410, Cys-423, and Cys-429. One can recognise a BRCT domain in the interval 587–664; that stretch reads IDENPFMDKT…NEEEFSNKIK (78 aa).

This sequence belongs to the NAD-dependent DNA ligase family. LigA subfamily. It depends on Mg(2+) as a cofactor. Mn(2+) is required as a cofactor.

The catalysed reaction is NAD(+) + (deoxyribonucleotide)n-3'-hydroxyl + 5'-phospho-(deoxyribonucleotide)m = (deoxyribonucleotide)n+m + AMP + beta-nicotinamide D-nucleotide.. Its function is as follows. DNA ligase that catalyzes the formation of phosphodiester linkages between 5'-phosphoryl and 3'-hydroxyl groups in double-stranded DNA using NAD as a coenzyme and as the energy source for the reaction. It is essential for DNA replication and repair of damaged DNA. This Clostridium botulinum (strain Loch Maree / Type A3) protein is DNA ligase.